Reading from the N-terminus, the 345-residue chain is GDP-mannose transporter (345 aa).

Topologically, residues 1-8 (MDNHMLNR) are cytoplasmic. The helical transmembrane segment at 9 to 29 (ISKSPILPVVSYCMASILMTL) threads the bilayer. Residues 30 to 40 (TNKYVLSSPGY) lie on the Lumenal side of the membrane. The helical transmembrane segment at 41–61 (NMNFLLLTVQSTVCVAAIGIL) threads the bilayer. Over 62–78 (KRLKVINYRDFDFREAK) the chain is Cytoplasmic. Residues 79-101 (FWFPISFLLVAMIYTASKALQFL) traverse the membrane as a helical segment. At 102–104 (SVP) the chain is on the lumenal side. A helical transmembrane segment spans residues 105 to 127 (VYTIFKNLTIIIIAYGEVLWFGG). Residues 128–131 (HVTA) lie on the Cytoplasmic side of the membrane. The chain crosses the membrane as a helical span at residues 132–150 (LTLFSFGLMVLSSIVAAWA). Over 151 to 161 (DIQSSSFASQT) the chain is Lumenal. Residues 162–182 (LNSGYLWMVLNCLTNAAFVLA) form a helical membrane-spanning segment. Topologically, residues 183–194 (MRKRIKLTNFRD) are cytoplasmic. The helical transmembrane segment at 195-215 (FDTMFYNNLLSIPVLVICTLF) threads the bilayer. The Lumenal segment spans residues 216–233 (TEDWSAENIAQNFPPDAK). A helical membrane pass occupies residues 234-254 (FGVLMAMAISGVSSVGISYTS). At 255 to 264 (AWCVRVTSST) the chain is on the cytoplasmic side. Residues 265–285 (TYSMVGALNKLPLAIAGLVFF) traverse the membrane as a helical segment. Residues 286-288 (DAP) are Lumenal-facing. Residues 289 to 309 (ITFGSVTAILLGFISGVVYAV) traverse the membrane as a helical segment. Residues 310 to 345 (AKSQQQRQKDPATILPMTHNPVSASSQSMRDSLSKS) are Cytoplasmic-facing. The tract at residues 319-345 (DPATILPMTHNPVSASSQSMRDSLSKS) is disordered. Residues 329-345 (NPVSASSQSMRDSLSKS) are compositionally biased toward polar residues.

The protein belongs to the TPT transporter family. SLC35D subfamily. In terms of assembly, homooligomer.

The protein localises to the golgi apparatus membrane. The protein resides in the cytoplasmic vesicle membrane. It localises to the endoplasmic reticulum membrane. Involved in the import of GDP-mannose from the cytoplasm into the Golgi lumen. The chain is GDP-mannose transporter (vrg4) from Schizosaccharomyces pombe (strain 972 / ATCC 24843) (Fission yeast).